A 642-amino-acid polypeptide reads, in one-letter code: Threonine--tRNA ligase (642 aa).

A TGS domain is found at 1–61 (MPVITLPDGS…ENDATLSIIT (61 aa)). The catalytic stretch occupies residues 243-534 (DHRKIGKQLD…LTEEFAGFFP (292 aa)). The Zn(2+) site is built by C334, H385, and H511.

Belongs to the class-II aminoacyl-tRNA synthetase family. Homodimer. Requires Zn(2+) as cofactor.

The protein localises to the cytoplasm. It carries out the reaction tRNA(Thr) + L-threonine + ATP = L-threonyl-tRNA(Thr) + AMP + diphosphate + H(+). Catalyzes the attachment of threonine to tRNA(Thr) in a two-step reaction: L-threonine is first activated by ATP to form Thr-AMP and then transferred to the acceptor end of tRNA(Thr). Also edits incorrectly charged L-seryl-tRNA(Thr). This chain is Threonine--tRNA ligase, found in Salmonella agona (strain SL483).